We begin with the raw amino-acid sequence, 122 residues long: Acidic phospholipase A2 BlatPLA2 (122 aa).

Intrachain disulfides connect Cys-26-Cys-115, Cys-28-Cys-44, Cys-43-Cys-95, Cys-49-Cys-122, Cys-50-Cys-88, Cys-57-Cys-81, and Cys-75-Cys-86. Tyr-27, Gly-29, and Gly-31 together coordinate Ca(2+). His-47 is an active-site residue. Asp-48 lines the Ca(2+) pocket. Residue Asp-89 is part of the active site.

The protein belongs to the phospholipase A2 family. Group II subfamily. D49 sub-subfamily. In terms of assembly, monomer. Ca(2+) is required as a cofactor. In terms of tissue distribution, expressed by the venom gland.

The protein resides in the secreted. The enzyme catalyses a 1,2-diacyl-sn-glycero-3-phosphocholine + H2O = a 1-acyl-sn-glycero-3-phosphocholine + a fatty acid + H(+). Acidic phospholipase A2 (PLA2) that only causes a mild edema, when subcutaneously injected in the mice foot. PLA2 catalyzes the calcium-dependent hydrolysis of the 2-acyl groups in 3-sn-phosphoglycerides. In Bothriechis lateralis (Side-striped palm pitviper), this protein is Acidic phospholipase A2 BlatPLA2.